The sequence spans 152 residues: 3-dehydroquinate dehydratase (152 aa).

Tyr25 serves as the catalytic Proton acceptor. Substrate-binding residues include Asn76, His82, and Asp89. The active-site Proton donor is His102. Residues 103-104 and Arg113 contribute to the substrate site; that span reads LS.

The protein belongs to the type-II 3-dehydroquinase family. In terms of assembly, homododecamer.

It catalyses the reaction 3-dehydroquinate = 3-dehydroshikimate + H2O. The protein operates within metabolic intermediate biosynthesis; chorismate biosynthesis; chorismate from D-erythrose 4-phosphate and phosphoenolpyruvate: step 3/7. Functionally, catalyzes a trans-dehydration via an enolate intermediate. The sequence is that of 3-dehydroquinate dehydratase from Gloeothece citriformis (strain PCC 7424) (Cyanothece sp. (strain PCC 7424)).